Consider the following 197-residue polypeptide: DNA-directed RNA polymerases I, II, and III subunit rpabc1 (197 aa).

Belongs to the archaeal Rpo5/eukaryotic RPB5 RNA polymerase subunit family. Component of the RNA polymerase I (Pol I), RNA polymerase II (Pol II) and RNA polymerase III (Pol III) complexes consisting of at least 13, 12 and 17 subunits, respectively. In RNA Pol II, this subunit is present in 2-fold molar excess over the other subunits.

The protein resides in the nucleus. In terms of biological role, DNA-dependent RNA polymerase catalyzes the transcription of DNA into RNA using the four ribonucleoside triphosphates as substrates. Common component of RNA polymerases I, II and III which synthesize ribosomal RNA precursors, mRNA precursors and many functional non-coding RNAs, and small RNAs, such as 5S rRNA and tRNAs, respectively. Pol II is the central component of the basal RNA polymerase II transcription machinery. Pols are composed of mobile elements that move relative to each other. In Pol II, RPB5 is part of the lower jaw surrounding the central large cleft and thought to grab the incoming DNA template. Seems to be the major component in this process. The protein is DNA-directed RNA polymerases I, II, and III subunit rpabc1 (polr2e) of Dictyostelium discoideum (Social amoeba).